Consider the following 60-residue polypeptide: Small ribosomal subunit protein uS10 (60 aa).

This sequence belongs to the universal ribosomal protein uS10 family.

This is Small ribosomal subunit protein uS10 (RPS20) from Zea mays (Maize).